Here is a 564-residue protein sequence, read N- to C-terminus: Probable diguanylate cyclase DgcQ (564 aa).

Helical transmembrane passes span 20 to 40 (LGPG…STLL) and 360 to 380 (IALT…WYVI). The GGDEF domain maps to 428 to 563 (HPFSVIQVDL…GRNRVFASDN (136 aa)). Aspartate 436 contributes to the Mg(2+) binding site. Substrate-binding residues include asparagine 444, histidine 449, and aspartate 453. Residue glutamate 479 coordinates Mg(2+). The active-site Proton acceptor is glutamate 479.

In terms of assembly, homodimer. Mg(2+) is required as a cofactor.

It localises to the cell inner membrane. The enzyme catalyses 2 GTP = 3',3'-c-di-GMP + 2 diphosphate. The protein operates within glycan metabolism; bacterial cellulose biosynthesis. It functions in the pathway purine metabolism; 3',5'-cyclic di-GMP biosynthesis. Functionally, catalyzes the synthesis of cyclic-di-GMP (c-di-GMP) via the condensation of 2 GTP molecules. Cyclic-di-GMP is a second messenger which controls cell surface-associated traits in bacteria. Involved in the regulation of cellulose production. This is Probable diguanylate cyclase DgcQ from Escherichia coli O157:H7.